Reading from the N-terminus, the 934-residue chain is LPS-assembly protein LptD (934 aa).

Positions 1 to 33 (MALKSPAFRRKFPLLVTGGLLALQPFATSYVVA) are cleaved as a signal peptide. A disordered region spans residues 52–86 (KSPVNNLPPRPVHDGAALTSGTEAPSAEAESADKP).

It belongs to the LptD family. Component of the lipopolysaccharide transport and assembly complex. Interacts with LptE and LptA.

It localises to the cell outer membrane. Functionally, together with LptE, is involved in the assembly of lipopolysaccharide (LPS) at the surface of the outer membrane. In Pseudomonas putida (strain W619), this protein is LPS-assembly protein LptD.